Here is a 483-residue protein sequence, read N- to C-terminus: tRNA sulfurtransferase (483 aa).

Residues Gly63–Lys167 enclose the THUMP domain. Residues Leu185–Ile186, Lys267, Gly289, and Gln298 contribute to the ATP site. Residues Cys346 and Cys457 are joined by a disulfide bond. In terms of domain architecture, Rhodanese spans Leu405 to Pro483. Residue Cys457 is the Cysteine persulfide intermediate of the active site.

The protein belongs to the ThiI family.

Its subcellular location is the cytoplasm. The enzyme catalyses [ThiI sulfur-carrier protein]-S-sulfanyl-L-cysteine + a uridine in tRNA + 2 reduced [2Fe-2S]-[ferredoxin] + ATP + H(+) = [ThiI sulfur-carrier protein]-L-cysteine + a 4-thiouridine in tRNA + 2 oxidized [2Fe-2S]-[ferredoxin] + AMP + diphosphate. It catalyses the reaction [ThiS sulfur-carrier protein]-C-terminal Gly-Gly-AMP + S-sulfanyl-L-cysteinyl-[cysteine desulfurase] + AH2 = [ThiS sulfur-carrier protein]-C-terminal-Gly-aminoethanethioate + L-cysteinyl-[cysteine desulfurase] + A + AMP + 2 H(+). The protein operates within cofactor biosynthesis; thiamine diphosphate biosynthesis. Catalyzes the ATP-dependent transfer of a sulfur to tRNA to produce 4-thiouridine in position 8 of tRNAs, which functions as a near-UV photosensor. Also catalyzes the transfer of sulfur to the sulfur carrier protein ThiS, forming ThiS-thiocarboxylate. This is a step in the synthesis of thiazole, in the thiamine biosynthesis pathway. The sulfur is donated as persulfide by IscS. The polypeptide is tRNA sulfurtransferase (Saccharophagus degradans (strain 2-40 / ATCC 43961 / DSM 17024)).